We begin with the raw amino-acid sequence, 495 residues long: Putative aldehyde dehydrogenase DhaS (495 aa).

Residue 244–249 (GSTEIG) participates in NAD(+) binding. Residues E266 and C300 contribute to the active site.

This sequence belongs to the aldehyde dehydrogenase family.

The catalysed reaction is an aldehyde + NAD(+) + H2O = a carboxylate + NADH + 2 H(+). This Bacillus subtilis (strain 168) protein is Putative aldehyde dehydrogenase DhaS (dhaS).